Here is a 74-residue protein sequence, read N- to C-terminus: Protein translocase subunit SecE (74 aa).

Residues 1 to 36 are Cytoplasmic-facing; that stretch reads MKTDFNQKIEQLKEFIEECRRVWLVLKKPTKDEYLA. The helical transmembrane segment at 37–62 threads the bilayer; sequence VAKVTALGISLLGIIGYIIHVPATYI. Over 63–74 the chain is Extracellular; sequence KGILKPPTTPRV.

Belongs to the SecE/SEC61-gamma family. As to quaternary structure, component of the Sec protein translocase complex. Heterotrimer consisting of alpha (SecY), beta (SecG) and gamma (SecE) subunits. The heterotrimers can form oligomers, although 1 heterotrimer is thought to be able to translocate proteins. Interacts with the ribosome. May interact with SecDF, and other proteins may be involved.

It localises to the cell membrane. In terms of biological role, essential subunit of the protein translocation channel SecYEG. Clamps together the 2 halves of SecY. May contact the channel plug during translocation. This chain is Protein translocase subunit SecE, found in Methanocaldococcus jannaschii (strain ATCC 43067 / DSM 2661 / JAL-1 / JCM 10045 / NBRC 100440) (Methanococcus jannaschii).